The sequence spans 133 residues: Small ribosomal subunit protein uS19 (133 aa).

Belongs to the universal ribosomal protein uS19 family.

Its function is as follows. Protein S19 forms a complex with S13 that binds strongly to the 16S ribosomal RNA. In Thermococcus gammatolerans (strain DSM 15229 / JCM 11827 / EJ3), this protein is Small ribosomal subunit protein uS19.